The primary structure comprises 341 residues: Phosphoribosylformylglycinamidine cyclo-ligase (341 aa).

The protein belongs to the AIR synthase family.

The protein localises to the cytoplasm. It catalyses the reaction 2-formamido-N(1)-(5-O-phospho-beta-D-ribosyl)acetamidine + ATP = 5-amino-1-(5-phospho-beta-D-ribosyl)imidazole + ADP + phosphate + H(+). It participates in purine metabolism; IMP biosynthesis via de novo pathway; 5-amino-1-(5-phospho-D-ribosyl)imidazole from N(2)-formyl-N(1)-(5-phospho-D-ribosyl)glycinamide: step 2/2. The sequence is that of Phosphoribosylformylglycinamidine cyclo-ligase from Thermosynechococcus vestitus (strain NIES-2133 / IAM M-273 / BP-1).